The primary structure comprises 557 residues: Copine-4 (557 aa).

C2 domains lie at 3–131 (KMSN…SKSL) and 137–264 (TAGK…VQWE). Ca(2+) contacts are provided by D170, D176, D232, D234, and D240. In terms of domain architecture, VWFA spans 305–507 (QIQFTVAIDF…VLRDIVQFVP (203 aa)).

The protein belongs to the copine family. In terms of assembly, interacts (via VWFA domain) with ACTB, BCOR, BICD2, CCDC22, CDC42BPB, CEP162, MYCBP2, NONO, PDCD6, PITPNM2, RDX, SKIL, SKT, SPTBN1, UBE2O and WTAP. It depends on Ca(2+) as a cofactor.

Its function is as follows. Probable calcium-dependent phospholipid-binding protein that may play a role in calcium-mediated intracellular processes. The polypeptide is Copine-4 (Mus musculus (Mouse)).